The chain runs to 77 residues: Small ribosomal subunit protein uS17 (77 aa).

This sequence belongs to the universal ribosomal protein uS17 family. As to quaternary structure, part of the 30S ribosomal subunit.

Functionally, one of the primary rRNA binding proteins, it binds specifically to the 5'-end of 16S ribosomal RNA. The protein is Small ribosomal subunit protein uS17 of Rickettsia conorii (strain ATCC VR-613 / Malish 7).